Reading from the N-terminus, the 146-residue chain is Benzoylsuccinyl-CoA thiolase subunit BbsA (146 aa).

Cys-42, Cys-45, Cys-55, and Cys-58 together coordinate Zn(2+).

Belongs to the BbsA family. In terms of assembly, heterotetramer composed of two BbsA subunits and two BbsB subunits. Both BbsA and BbsB are essential for enzymatic activity.

The catalysed reaction is (S)-2-benzoylsuccinyl-CoA + CoA = benzoyl-CoA + succinyl-CoA. Its pathway is xenobiotic degradation; toluene degradation. Its function is as follows. Component of the BbsAB thiolase complex, which catalyzes the thiolytic cleavage of (S)-2-benzoylsuccinyl-CoA to succinyl-CoA and benzoyl-CoA, the final step of anaerobic toluene metabolism. The BbsA subunit critically contributes to an induced-fit process for productive binding of a CoA substrate into the active site of BbsB. The protein is Benzoylsuccinyl-CoA thiolase subunit BbsA of Geobacter metallireducens (strain ATCC 53774 / DSM 7210 / GS-15).